A 449-amino-acid chain; its full sequence is Na(+)/H(+) antiporter NhaA 2 (449 aa).

11 helical membrane passes run 32 to 52 (IEATSGAVLLLATVVALTLSN), 87 to 107 (GLMTLFFFIVALEIKREVVLG), 114 to 134 (MVALSVVAAAGGMLVPMGLYL), 145 to 165 (GWGVVMPTDTAFVIGCLALLG), 174 to 194 (VFLLSLAVVDDLAAILVVAVG), 202 to 222 (TALALGAVGLVIIRGMALLGV), 233 to 253 (AIIWLAVNASGIHATIVGVIL), 318 to 338 (WVAFGVMPLFALANAGVPITI), 347 to 367 (LAVMAGFVLGKPIGVTAFAWL), 382 to 402 (WGGLVGGALLTGIGFTMALFI), and 417 to 437 (LGILAASVVSSVAGLTLLCAL).

It belongs to the NhaA Na(+)/H(+) (TC 2.A.33) antiporter family.

It localises to the cell inner membrane. The catalysed reaction is Na(+)(in) + 2 H(+)(out) = Na(+)(out) + 2 H(+)(in). Its function is as follows. Na(+)/H(+) antiporter that extrudes sodium in exchange for external protons. This Acidiphilium cryptum (strain JF-5) protein is Na(+)/H(+) antiporter NhaA 2.